The following is a 211-amino-acid chain: RING finger protein narya (211 aa).

The RING-type zinc finger occupies 6-47 (CNKCFRHRKTDPAVPFHLTQCRHVICGPCLGQSSLEKNCPLC). The tract at residues 149 to 211 (RRRHSAGERF…FGSDTKGFRL (63 aa)) is disordered. Basic and acidic residues predominate over residues 153 to 165 (SAGERFHTPEFKE). Over residues 172-184 (STSDKSPSDMPSD) the composition is skewed to low complexity.

In terms of assembly, may interact with itself, with nenya and vilya through its RING-type zinc finger. Expressed in nurse cell and pro-oocytes (at protein level).

The protein resides in the chromosome. Required for the formation of DNA double-strand breaks (DSBs) together with nenya and vilya during the meiotic recombination process. Plays a role in DSBs processing into crossovers. Plays a redundant role with nenya in chromosome segregation during female meiosis. The protein is RING finger protein narya of Drosophila melanogaster (Fruit fly).